A 356-amino-acid polypeptide reads, in one-letter code: DNA polymerase IV (356 aa).

The UmuC domain maps to 7 to 188 (IIHIDMDCFY…LPLKKIPGVG (182 aa)). Positions 11 and 106 each coordinate Mg(2+). Residue glutamate 107 is part of the active site.

The protein belongs to the DNA polymerase type-Y family. As to quaternary structure, monomer. Requires Mg(2+) as cofactor.

The protein resides in the cytoplasm. The enzyme catalyses DNA(n) + a 2'-deoxyribonucleoside 5'-triphosphate = DNA(n+1) + diphosphate. Poorly processive, error-prone DNA polymerase involved in untargeted mutagenesis. Copies undamaged DNA at stalled replication forks, which arise in vivo from mismatched or misaligned primer ends. These misaligned primers can be extended by PolIV. Exhibits no 3'-5' exonuclease (proofreading) activity. May be involved in translesional synthesis, in conjunction with the beta clamp from PolIII. The polypeptide is DNA polymerase IV (Actinobacillus pleuropneumoniae serotype 3 (strain JL03)).